Here is a 383-residue protein sequence, read N- to C-terminus: Trichodiene synthase (383 aa).

The protein belongs to the trichodiene synthase family.

The catalysed reaction is (2E,6E)-farnesyl diphosphate = trichodiene + diphosphate. The protein operates within sesquiterpene biosynthesis; trichothecene biosynthesis. Functionally, TS is a member of the terpene cyclase group of enzymes. It catalyzes the isomerization and cyclization of farnesyl pyro-phosphate to form trichodiene, the first cyclic intermediate in the biosynthetic pathway for trichothecenes. It serves to branch trichothecene biosynthesis from the isoprenoid pathway. This chain is Trichodiene synthase (TRI5), found in Gibberella pulicaris.